A 262-amino-acid polypeptide reads, in one-letter code: Hydroxyethylthiazole kinase (262 aa).

Substrate is bound at residue Met-50. Residues Arg-125 and Thr-171 each coordinate ATP. Gly-198 serves as a coordination point for substrate.

Belongs to the Thz kinase family. The cofactor is Mg(2+).

The enzyme catalyses 5-(2-hydroxyethyl)-4-methylthiazole + ATP = 4-methyl-5-(2-phosphooxyethyl)-thiazole + ADP + H(+). It participates in cofactor biosynthesis; thiamine diphosphate biosynthesis; 4-methyl-5-(2-phosphoethyl)-thiazole from 5-(2-hydroxyethyl)-4-methylthiazole: step 1/1. Catalyzes the phosphorylation of the hydroxyl group of 4-methyl-5-beta-hydroxyethylthiazole (THZ). This is Hydroxyethylthiazole kinase from Shigella boydii serotype 18 (strain CDC 3083-94 / BS512).